Reading from the N-terminus, the 151-residue chain is Putative pre-16S rRNA nuclease (151 aa).

This sequence belongs to the YqgF nuclease family.

It localises to the cytoplasm. Functionally, could be a nuclease involved in processing of the 5'-end of pre-16S rRNA. This is Putative pre-16S rRNA nuclease from Prochlorococcus marinus subsp. pastoris (strain CCMP1986 / NIES-2087 / MED4).